A 94-amino-acid chain; its full sequence is Protein RnfH (94 aa).

This sequence belongs to the UPF0125 (RnfH) family.

This chain is Protein RnfH, found in Sodalis glossinidius (strain morsitans).